A 532-amino-acid chain; its full sequence is P granule abnormality protein 2 (532 aa).

As to quaternary structure, interacts with pgl-1 and pgl-3; association with either pgl-1 or pgl-3 is not required for P-granule localization. Highly expressed in the germline.

It localises to the cytoplasmic granule. Functionally, transient component of P-granule which is involved in germline development. In Caenorhabditis elegans, this protein is P granule abnormality protein 2.